Reading from the N-terminus, the 229-residue chain is MNKYFKVFFFVLLTHALKSALIFGQATLQKGLSLDIDKDSKATDRLVVKHFDSDKQGYKAYTFKKEGWEYVNVKHVYFGERLLRVGRDQDMKCDYVHYVKVFWKGELAPFLIKMKYYNWAWVSTRLHFRLTPELTWAEVFVPTIDENSEEGYMKLFKKRMDDFVSQVGEDRLATYKPFTEDPSKKRFDLTPTDEKEDTNKKKYVLMVVVVVVFVVVASLVVFLVKFCLK.

The first 19 residues, 1–19, serve as a signal peptide directing secretion; that stretch reads MNKYFKVFFFVLLTHALKS. The Extracellular segment spans residues 20 to 203; it reads ALIFGQATLQ…EKEDTNKKKY (184 aa). A helical membrane pass occupies residues 204-224; it reads VLMVVVVVVFVVVASLVVFLV. Residues 225–229 lie on the Cytoplasmic side of the membrane; it reads KFCLK.

It is found in the membrane. This is 23 kDa piroplasm membrane protein from Theileria parva (East coast fever infection agent).